Consider the following 122-residue polypeptide: MARIAGVNIPTAKRVVIALTYIHGIGPKFAQEIVEKVGIPAERRVHQLTDAEVLQIRETIDRDYQVEGDLRRETAMNIKRLMDLGCYRGLRHRRGLPVRGQRTHTNARTRKGPAKAIAGKKK.

Positions arginine 99 to lysine 122 are disordered.

This sequence belongs to the universal ribosomal protein uS13 family. As to quaternary structure, part of the 30S ribosomal subunit. Forms a loose heterodimer with protein S19. Forms two bridges to the 50S subunit in the 70S ribosome.

Its function is as follows. Located at the top of the head of the 30S subunit, it contacts several helices of the 16S rRNA. In the 70S ribosome it contacts the 23S rRNA (bridge B1a) and protein L5 of the 50S subunit (bridge B1b), connecting the 2 subunits; these bridges are implicated in subunit movement. Contacts the tRNAs in the A and P-sites. This Rhizobium etli (strain ATCC 51251 / DSM 11541 / JCM 21823 / NBRC 15573 / CFN 42) protein is Small ribosomal subunit protein uS13.